We begin with the raw amino-acid sequence, 142 residues long: Large ribosomal subunit protein bL17 (142 aa).

It belongs to the bacterial ribosomal protein bL17 family. Part of the 50S ribosomal subunit. Contacts protein L32.

The chain is Large ribosomal subunit protein bL17 from Chlamydia muridarum (strain MoPn / Nigg).